Reading from the N-terminus, the 476-residue chain is MSYEERANAHPNLNDESDVEEEALVNDYREQVNFDDGMSELDRTTSLGAASQTQDLQAQLAAAATPLEYQATLETKFASYDNYCSLFHYILNSDGPVELEVPSYYWAWDVIDEFIYQFESFCRYRNRVARSGSNEEEAQLLRENPNTWGCYSVLNVLYSLIQRSQINEQLAAMKRGEDPLAFAGEYGSRPLYKMLGYFSIIGLLRVHCLLGDFSLALKTLDDIEMNKKAMFARVMAAHFTTYYYVGFSYMMMRRYGDAIRMFSHILVYVSRTKNFQKGGNSYDAIAKKNDQMYALIAICVALHPTRLDDTIHSALREKYGEQLNRLQHGGPEALPLFEELFRSACPKFISPTPPDFDNPSVNIDPVDHHTAIFMDEVKNTLYNPTIRSYLKLYTTMDLKKLAGFLEVEPEKLRSWLLVNKQRSRQVRWVEGGLLEGEPVNANDLDYALEKDLIHVSETKAGRRLVDWYLRNLARVY.

The 196-residue stretch at 257–452 (DAIRMFSHIL…DLDYALEKDL (196 aa)) folds into the PCI domain.

It belongs to the eIF-3 subunit L family. In terms of assembly, component of the eukaryotic translation initiation factor 3 (eIF-3) complex.

The protein resides in the cytoplasm. Functionally, component of the eukaryotic translation initiation factor 3 (eIF-3) complex, which is involved in protein synthesis of a specialized repertoire of mRNAs and, together with other initiation factors, stimulates binding of mRNA and methionyl-tRNAi to the 40S ribosome. The eIF-3 complex specifically targets and initiates translation of a subset of mRNAs involved in cell proliferation. This chain is Eukaryotic translation initiation factor 3 subunit L, found in Aspergillus terreus (strain NIH 2624 / FGSC A1156).